A 351-amino-acid chain; its full sequence is Photosystem II D2 protein (351 aa).

A helical transmembrane segment spans residues 39–59; that stretch reads TAYLSIGGWLTGTTFVTSWYT. A chlorophyll a-binding site is contributed by H116. Residues 123-139 traverse the membrane as a helical segment; sequence GFMLRQFEIARLVGIRP. Q128 and N141 together coordinate pheophytin a. A helical transmembrane segment spans residues 151–164; the sequence is VFVSVFLMYPLGQS. H196 is a chlorophyll a binding site. A helical transmembrane segment spans residues 206–226; sequence GALLCAIHGATVENTLFEDGE. A plastoquinone is bound by residues H213 and F260. Residue H213 coordinates Fe cation. H267 lines the Fe cation pocket. The chain crosses the membrane as a helical span at residues 277–293; the sequence is GLWTSAIGIIGLALNLR.

The protein belongs to the reaction center PufL/M/PsbA/D family. In terms of assembly, PSII is composed of 1 copy each of membrane proteins PsbA, PsbB, PsbC, PsbD, PsbE, PsbF, PsbH, PsbI, PsbJ, PsbK, PsbL, PsbM, PsbT, PsbX, PsbY, PsbZ, Psb30/Ycf12, peripheral proteins PsbO, CyanoQ (PsbQ), PsbU, PsbV and a large number of cofactors. It forms dimeric complexes. The cofactor is The D1/D2 heterodimer binds P680, chlorophylls that are the primary electron donor of PSII, and subsequent electron acceptors. It shares a non-heme iron and each subunit binds pheophytin, quinone, additional chlorophylls, carotenoids and lipids. There is also a Cl(-1) ion associated with D1 and D2, which is required for oxygen evolution. The PSII complex binds additional chlorophylls, carotenoids and specific lipids..

The protein localises to the cellular thylakoid membrane. The catalysed reaction is 2 a plastoquinone + 4 hnu + 2 H2O = 2 a plastoquinol + O2. In terms of biological role, photosystem II (PSII) is a light-driven water:plastoquinone oxidoreductase that uses light energy to abstract electrons from H(2)O, generating O(2) and a proton gradient subsequently used for ATP formation. It consists of a core antenna complex that captures photons, and an electron transfer chain that converts photonic excitation into a charge separation. The D1/D2 (PsbA/PsbD) reaction center heterodimer binds P680, the primary electron donor of PSII as well as several subsequent electron acceptors. D2 is needed for assembly of a stable PSII complex. The sequence is that of Photosystem II D2 protein from Synechococcus sp. (strain CC9311).